The following is a 377-amino-acid chain: DNA replication and repair protein RecF (377 aa).

30-37 (GQNAQGKS) contributes to the ATP binding site.

Belongs to the RecF family.

Its subcellular location is the cytoplasm. The RecF protein is involved in DNA metabolism; it is required for DNA replication and normal SOS inducibility. RecF binds preferentially to single-stranded, linear DNA. It also seems to bind ATP. The sequence is that of DNA replication and repair protein RecF from Cyanothece sp. (strain PCC 7425 / ATCC 29141).